A 420-amino-acid chain; its full sequence is Sulfate adenylyltransferase (420 aa).

An N-acetylalanine modification is found at Ala-2.

Belongs to the sulfate adenylyltransferase family. It depends on Mg(2+) as a cofactor.

It catalyses the reaction sulfate + ATP + H(+) = adenosine 5'-phosphosulfate + diphosphate. Its pathway is sulfur metabolism; hydrogen sulfide biosynthesis; sulfite from sulfate: step 1/3. Its activity is regulated as follows. Inhibited by adenosine 5'-phosphosulfate (APS), but not by 3'phosphoadenosine 5'-phosphosulfate (PAPS). Inhibited by AMP, ADP, CTP, GTP, ITP, UTP and anions other than those in group IV. The chain is Sulfate adenylyltransferase from Pyropia yezoensis (Susabi-nori).